A 561-amino-acid polypeptide reads, in one-letter code: 3-hydroxy-3-methylglutaryl-coenzyme A reductase 3 (561 aa).

The next 2 helical transmembrane spans lie at 25–45 and 69–89; these read PIRH…AYLM and IFGL…AFVQ. Residues 90–145 are linker; sequence SIVSSSDDEEEDFLVGPARGSSAAAAVAPPPPPSSPAQCSLLGSPHDDAARERMPE. The segment at 113-146 is disordered; it reads AAAVAPPPPPSSPAQCSLLGSPHDDAARERMPEE. Over residues 134–143 the composition is skewed to basic and acidic residues; sequence PHDDAARERM. The catalytic stretch occupies residues 146 to 561; it reads EDEEIVSSVV…SSKDMSKVIS (416 aa). The active-site Charge relay system is Glu-240. Asn-304 carries an N-linked (GlcNAc...) asparagine glycan. Active-site charge relay system residues include Lys-372 and Asp-448. The Proton donor role is filled by His-546. Asn-550 carries an N-linked (GlcNAc...) asparagine glycan.

The protein belongs to the HMG-CoA reductase family.

Its subcellular location is the endoplasmic reticulum membrane. It catalyses the reaction (R)-mevalonate + 2 NADP(+) + CoA = (3S)-3-hydroxy-3-methylglutaryl-CoA + 2 NADPH + 2 H(+). It participates in metabolic intermediate biosynthesis; (R)-mevalonate biosynthesis; (R)-mevalonate from acetyl-CoA: step 3/3. Functionally, catalyzes the synthesis of mevalonate. The specific precursor of all isoprenoid compounds present in plants. The chain is 3-hydroxy-3-methylglutaryl-coenzyme A reductase 3 (HMG3) from Oryza sativa subsp. japonica (Rice).